We begin with the raw amino-acid sequence, 358 residues long: Mannonate dehydratase (358 aa).

The protein belongs to the mannonate dehydratase family. The cofactor is Fe(2+). Requires Mn(2+) as cofactor.

The enzyme catalyses D-mannonate = 2-dehydro-3-deoxy-D-gluconate + H2O. It participates in carbohydrate metabolism; pentose and glucuronate interconversion. Catalyzes the dehydration of D-mannonate. The polypeptide is Mannonate dehydratase (Lachnoclostridium phytofermentans (strain ATCC 700394 / DSM 18823 / ISDg) (Clostridium phytofermentans)).